An 89-amino-acid chain; its full sequence is Small ribosomal subunit protein uS14 (89 aa).

The protein belongs to the universal ribosomal protein uS14 family. In terms of assembly, part of the 30S ribosomal subunit. Contacts proteins S3 and S10.

Binds 16S rRNA, required for the assembly of 30S particles and may also be responsible for determining the conformation of the 16S rRNA at the A site. This chain is Small ribosomal subunit protein uS14, found in Chlorobium luteolum (strain DSM 273 / BCRC 81028 / 2530) (Pelodictyon luteolum).